We begin with the raw amino-acid sequence, 283 residues long: Phosphatidylglycerol--prolipoprotein diacylglyceryl transferase (283 aa).

The next 7 helical transmembrane spans lie at 21–41, 62–82, 106–126, 136–156, 190–210, 218–238, and 252–272; these read IEVH…FYMA, YFLW…ILIY, FIGI…IASY, LLIY…FGRI, PSQL…VMWA, GLLI…AEFY, and LSMG…ILLY. Residue R155 coordinates a 1,2-diacyl-sn-glycero-3-phospho-(1'-sn-glycerol).

This sequence belongs to the Lgt family.

The protein resides in the cell inner membrane. It catalyses the reaction L-cysteinyl-[prolipoprotein] + a 1,2-diacyl-sn-glycero-3-phospho-(1'-sn-glycerol) = an S-1,2-diacyl-sn-glyceryl-L-cysteinyl-[prolipoprotein] + sn-glycerol 1-phosphate + H(+). It participates in protein modification; lipoprotein biosynthesis (diacylglyceryl transfer). Its function is as follows. Catalyzes the transfer of the diacylglyceryl group from phosphatidylglycerol to the sulfhydryl group of the N-terminal cysteine of a prolipoprotein, the first step in the formation of mature lipoproteins. The chain is Phosphatidylglycerol--prolipoprotein diacylglyceryl transferase from Helicobacter acinonychis (strain Sheeba).